The chain runs to 275 residues: MELSDIPFPIPSADDFYDDPCFNTNDMHFFEDLDPRLVHVSLLKPDEHHHIEDEHVRAPSGHHQAGRCLLWACKACKRKTTNADRRKAATMRERRRLSKVNDAFETLKRCTSTNPNQRLPKVEILRNAISYIESLQALLRSQEDNYYPVLEHYSGDSDASSPRSNCSDGMMDFMGPTCQTRRRNSYDSSYFNDTPNADARNNKNSVVSSLDCLSSIVERISTETPACPVLSVPEGHEESPCSPHEGSVLSDTGTTAPSPTSCPQQQAQETIYQVL.

Residues 84 to 135 enclose the bHLH domain; the sequence is DRRKAATMRERRRLSKVNDAFETLKRCTSTNPNQRLPKVEILRNAISYIESL. A disordered region spans residues 234–275; that stretch reads EGHEESPCSPHEGSVLSDTGTTAPSPTSCPQQQAQETIYQVL. A compositionally biased stretch (polar residues) spans 249–275; sequence LSDTGTTAPSPTSCPQQQAQETIYQVL.

Efficient DNA binding requires dimerization with another bHLH protein. From mid-gastrula to just before somite formation, expressed in cells adjacent to axial mesoderm. Subsequently, during the anterior-to-posterior wave of somite formation and maturation, expressed within particular regions of each somite. Expressed in both muscle and non-muscle cells.

The protein localises to the nucleus. May act as a transcriptional activator that promotes transcription of muscle-specific target genes and plays a role in muscle differentiation. This Danio rerio (Zebrafish) protein is Myoblast determination protein 1 homolog (myod1).